We begin with the raw amino-acid sequence, 515 residues long: Maturase K (515 aa).

This sequence belongs to the intron maturase 2 family. MatK subfamily.

It localises to the plastid. The protein resides in the chloroplast. In terms of biological role, usually encoded in the trnK tRNA gene intron. Probably assists in splicing its own and other chloroplast group II introns. This Picea mariana (Black spruce) protein is Maturase K.